The primary structure comprises 659 residues: MFKLFTARQHDKIWDFDGGIHPPEMKLQSSTVPMRIAPLPDQLIIPLQQHLGPEGELRVRAGEQVLKGQPLTVGRGRTVPVHAPTSGMITAIAPHTTAHPSGLAELCVHITPDGEDRWREQQPWADYRQRDKMALLDRIHQAGIAGLGGAGFPTASKLQGGLNGIITLIINAAECEPYITADDRLMQEHADEVITGIHILRHLLQPQQVLIGIEDNKPEAIAALQRALRGQDDIHLRVVPTKYPSGGAKQLTKILTGKEVPFGKHSSSIGVLMQNVGTVVAIKRAVIDDEPLIERVVTLTGDALSSPGNFWARIGTPVLYLLKLAGFKPQNPPMVIMGGPLMGFTLPSLDVPIVKISNCILAPAETEMGLSEPEQSCIRCGLCVDACPAGLLPQQLYWFSRGEEHEKARNHNLFDCIECGACAYVCPSNIPLVQYYRQEKAEIRALDQESARAAEAKARFEAKQARLAREKLARELRHKQAAVKLTDADQQTVDAAVSRLTRQSDGSESVINIPAGQMPDNSAVIAAREARKAQARARQAEKQQARSTEETTDIVDPRQAAVAAAIARVKAKKAAQVQHVTTDVAEAGSEAIAEDPRKAAVAAAIARVKAKKAAQVQHVTTDVAEAGSEAMAEDPRKAAVAAAIARVKAKKAAQAINPD.

2 4Fe-4S ferredoxin-type domains span residues 366–397 and 407–436; these read TEMG…QQLY and KARN…VQYY. [4Fe-4S] cluster is bound by residues Cys-377, Cys-380, Cys-383, Cys-387, Cys-416, Cys-419, Cys-422, and Cys-426.

It belongs to the 4Fe4S bacterial-type ferredoxin family. RnfC subfamily. The complex is composed of six subunits: RnfA, RnfB, RnfC, RnfD, RnfE and RnfG. Requires [4Fe-4S] cluster as cofactor.

It is found in the cell inner membrane. Functionally, part of a membrane-bound complex that couples electron transfer with translocation of ions across the membrane. This Yersinia pseudotuberculosis serotype IB (strain PB1/+) protein is Ion-translocating oxidoreductase complex subunit C.